The sequence spans 334 residues: Transaldolase (334 aa).

N-acetylserine is present on Ser2. The active-site Schiff-base intermediate with substrate is the Lys143.

This sequence belongs to the transaldolase family. Type 1 subfamily. As to quaternary structure, homodimer.

It catalyses the reaction D-sedoheptulose 7-phosphate + D-glyceraldehyde 3-phosphate = D-erythrose 4-phosphate + beta-D-fructose 6-phosphate. The protein operates within carbohydrate degradation; pentose phosphate pathway; D-glyceraldehyde 3-phosphate and beta-D-fructose 6-phosphate from D-ribose 5-phosphate and D-xylulose 5-phosphate (non-oxidative stage): step 2/3. Its function is as follows. Transaldolase is important for the balance of metabolites in the pentose-phosphate pathway. The chain is Transaldolase (TAL1) from Kluyveromyces lactis (strain ATCC 8585 / CBS 2359 / DSM 70799 / NBRC 1267 / NRRL Y-1140 / WM37) (Yeast).